We begin with the raw amino-acid sequence, 537 residues long: Myosin-binding protein H (537 aa).

Residues 1-25 (MTGKTAPAAAKKAPAAKKAPAPASK) show a composition bias toward low complexity. Residues 1-138 (MTGKTAPAAA…KPKEEPPSVP (138 aa)) form a disordered region. A compositionally biased stretch (basic and acidic residues) spans 26–69 (KAPEPAPKEKPAPTPKEGHAPTPKEEHAPPPKEEHAPPPKEEHA). Low complexity predominate over residues 87–104 (EQPAAPAAEHAPTPTHEA). Positions 112 to 124 (PPPAAPAEAPAPE) are enriched in pro residues. The 96-residue stretch at 137 to 232 (VPLSLAVEEV…LEQPVLIREI (96 aa)) folds into the Fibronectin type-III 1 domain. Residues 236–324 (PRIRLPRQLR…NGAEDKAILD (89 aa)) form the Ig-like C2-type 1 domain. The Fibronectin type-III 2 domain maps to 333–428 (PPQNLKLVDV…AAGVAHIKKT (96 aa)). Residues 444–528 (PKFTQPLTDR…VNPLGEASVD (85 aa)) form the Ig-like C2-type 2 domain.

Belongs to the immunoglobulin superfamily. MyBP family. Skeletal muscle. Seems to be also expressed in the slow tonic ald muscle. Not detected in gizzard or heart.

In terms of biological role, binds to myosin; probably involved in interaction with thick myofilaments in the A-band. In Gallus gallus (Chicken), this protein is Myosin-binding protein H (MYBPH).